A 158-amino-acid chain; its full sequence is Transcription elongation factor GreA (158 aa).

The protein belongs to the GreA/GreB family.

Functionally, necessary for efficient RNA polymerase transcription elongation past template-encoded arresting sites. The arresting sites in DNA have the property of trapping a certain fraction of elongating RNA polymerases that pass through, resulting in locked ternary complexes. Cleavage of the nascent transcript by cleavage factors such as GreA or GreB allows the resumption of elongation from the new 3'terminus. GreA releases sequences of 2 to 3 nucleotides. In Hamiltonella defensa subsp. Acyrthosiphon pisum (strain 5AT), this protein is Transcription elongation factor GreA.